The primary structure comprises 1125 residues: MDAFGDYVWPRATSELILLPVTGLECVGDRLLAGEGPDLLVYNLDLGGHLRMVKRVQNLLGHFLIHGFRVRPEPKGDLDSEAMIAVFGSKGLKVVKVSWGQSHLRELWRSGLWNMSDWIWDVRWIEGNVAVALGHNSVVLYDPVIGCMLQDVPCTDRCTLSSACLVGDTWKELTIVAGAVSNELLIWYPATALTDNKPVAPDRRVSGHVGVIFSMSYLESKGLLATASEDRSVRLWKVGDLRVPGGRVQNIGHCFGHSARVWQVKLLENYLISAGEDCVCLVWSHEGEILQAFRGHRGRGIRAIATHERQAWVVTGGDDSGIRLWHLAGRGYPGLGVSSLSFKSPSRPGALKAVTLAGSWRVLAVTDVGSLYLYDLEVKSWEQLLEDNRFRSYCLLEAAPGPEGFGLCALANGEGLVKVVPINTPTAAVEQKLFQGKVHSLSWALRGYEELLLLASGPGGVIACLEISAAPTGKAIFVKERCRYLLPPSKQRWHTCSAFLPPGDFLVCGDRRGSVMLFPVRPCLFKKPGAGSKAITAAEAPGAGSGSGGSESVPTGIGPVSTLHSLHGKQGVTSVTCHGGYLYSTGRDSSYFQLFVHGGHLQPVLRQKACRGMNWVAGLRMVPDGSMVILGFHANEFVVWSPRSHEKLHIVNCGGGHRSWAFSDTEAAMAFTYLKDGEVMLYRALGGCIRPNVILREGLHGREITCVKRVGTVTLGPEFEVPNLEHPDSLEPGSEGPGLIDIVITGSEDTTVCVLALPTTTGSAHALTSVCNHISSVRALAVWAVGTPGGPQDTRPGLTAQVVSAGGRAEIHCFSVMVTPDASTPSRLACHVMHLSSHRLDEYWDRQRNKHKMIKVDPETRYMSLAICELDNDRPGLGPGPLVAAACSDGAVRLFLLQDSGRILHLLAESFHHKRCVLKVHSFTHEAPNQRRRLILCSAATDGSLAFWDLTTAMDKGSTTLELPAHPGLPYQMGTPSMTVQAHSCGVNSLHTLPTPEGHHLVASGSEDGSLHVFTLAVKMPEPEEADGEAELVPQLCVLEEYSVPCAHAAHVTGVKILSPKLMVSASIDQRLTFWRLGQGEPTFMNSTVYHVPDVADMDCWPVSPEFGHRCALAGQGLEVYNWYD.

Met1 carries the post-translational modification N-acetylmethionine. WD repeat units follow at residues 53-97 (VKRV…VVKV), 105-143 (RELW…LYDP), 147-189 (CMLQ…IWYP), 200-238 (APDR…LWKV), 247-285 (RVQN…VWSH), 289-327 (ILQA…LWHL), 335-376 (LGVS…LYDL), 381-422 (WEQL…VVPI), 425-470 (PTAA…ISAA), 476-520 (IFVK…LFPV), 559-598 (PVST…FVHG), 604-642 (VLRQ…VWSP), 645-684 (HEKL…LYRA), 739-785 (LIDI…VWAV), 848-897 (RNKH…LFLL), 905-950 (HLLA…FWDL), 974-1016 (GTPS…VFTL), 1040-1077 (EEYS…FWRL), and 1083-1125 (TFMN…NWYD).

It belongs to the WD repeat WDR6 family. In terms of assembly, interacts with FTSJ1; the interaction is direct, and required for 2'-O-methylation of position 34 in substrate tRNAs. Interacts with IRS4. Interacts with STK11/LKB1.

Its subcellular location is the cytoplasm. Its function is as follows. Together with methyltransferase FTSJ1, methylates the 2'-O-ribose of nucleotides at position 34 of the tRNA anticodon loop of substrate tRNAs. Required for the correct positioning of the substrate tRNA for methylation. Required to suppress amino acid starvation-induced autophagy. Enhances the STK11/LKB1-induced cell growth suppression activity. The polypeptide is tRNA (34-2'-O)-methyltransferase regulator WDR6 (Wdr6) (Mus musculus (Mouse)).